A 181-amino-acid polypeptide reads, in one-letter code: Regulator of G-protein signaling 10 (181 aa).

Residues 1–35 (MFTRAVSRLSRKRPPSDIHDGDGSSSSGHQSLKST) are disordered. 2 positions are modified to phosphoserine: Ser-24 and Ser-41. An RGS domain is found at 41-156 (SLENLLEDPE…LKSDLFLKHR (116 aa)). Cys-74 carries S-palmitoyl cysteine lipidation. The interval 157–181 (RTEEEEEDPPDAQTAAKRASRIYNT) is disordered. Ser-176 bears the Phosphoserine mark.

Interacts with GNAZ, GNAI1 and GNAI3. Associates specifically with the activated, GTP-bound forms of GNAZ and GNAI3.

It is found in the cytoplasm. It localises to the cytosol. The protein resides in the nucleus. In terms of biological role, regulates G protein-coupled receptor signaling cascades, including signaling downstream of the muscarinic acetylcholine receptor CHRM2. Inhibits signal transduction by increasing the GTPase activity of G protein alpha subunits, thereby driving them into their inactive GDP-bound form. Modulates the activity of potassium channels that are activated in response to CHRM2 signaling. Activity on GNAZ is inhibited by palmitoylation of the G-protein. This is Regulator of G-protein signaling 10 (Rgs10) from Rattus norvegicus (Rat).